The primary structure comprises 1048 residues: Nonsense-mediated mRNA decay protein 5 (1048 aa).

In terms of domain architecture, Importin N-terminal spans 24–104 (AETHLKNASK…KDMLIKTMVS (81 aa)). Phosphoserine is present on Ser-977.

GTP-bound Ran dissociates the isolated NMD5/TFIIS complex.

It is found in the nucleus. The protein resides in the cytoplasm. Its function is as follows. Active in protein import into the nucleus. Its major import substrate is transcription elongation factor TFIIS. The sequence is that of Nonsense-mediated mRNA decay protein 5 (NMD5) from Saccharomyces cerevisiae (strain ATCC 204508 / S288c) (Baker's yeast).